The chain runs to 166 residues: Transcriptional repressor NrdR (166 aa).

A zinc finger spans residues 3-34 (CIKCGNMEDKVIDSRPIKEGKSIRRRRECLRC). Positions 49–139 (LFVKKRNGSI…VYCKFHDAKD (91 aa)) constitute an ATP-cone domain.

The protein belongs to the NrdR family. Zn(2+) is required as a cofactor.

In terms of biological role, negatively regulates transcription of bacterial ribonucleotide reductase nrd genes and operons by binding to NrdR-boxes. The protein is Transcriptional repressor NrdR of Methylacidiphilum infernorum (isolate V4) (Methylokorus infernorum (strain V4)).